Here is a 314-residue protein sequence, read N- to C-terminus: Homeobox-leucine zipper protein HAT7 (314 aa).

The disordered stretch occupies residues 77-109 (HHHLTQKSPTTTNNMNDQDQVGEEDNLSDDGSH). Residues 82 to 95 (QKSPTTTNNMNDQD) show a composition bias toward polar residues. Positions 112–171 (LGEKKKRLNLEQVRALEKSFELGNKLEPERKMQLAKALGLQPRQIAIWFQNRRARWKTKQ) form a DNA-binding region, homeobox. The segment at 172-207 (LERDYDSLKKQFDVLKSDNDSLLAHNKKLHAELVAL) is leucine-zipper.

Belongs to the HD-ZIP homeobox family. Class I subfamily. As to expression, expressed predominantly in flowers, and in the cortex of the root and the stem.

Its subcellular location is the nucleus. Functionally, probable transcription factor. The protein is Homeobox-leucine zipper protein HAT7 (HAT7) of Arabidopsis thaliana (Mouse-ear cress).